Here is a 302-residue protein sequence, read N- to C-terminus: 3-methyl-2-oxobutanoate hydroxymethyltransferase 1 (302 aa).

The Mg(2+) site is built by Asp-75 and Asp-118. 3-methyl-2-oxobutanoate contacts are provided by residues 75–76, Asp-118, and Lys-147; that span reads DS. Glu-149 is a Mg(2+) binding site. The Proton acceptor role is filled by Glu-217.

The protein belongs to the PanB family. In terms of assembly, homodecamer; pentamer of dimers. Requires Mg(2+) as cofactor.

It is found in the cytoplasm. It catalyses the reaction 3-methyl-2-oxobutanoate + (6R)-5,10-methylene-5,6,7,8-tetrahydrofolate + H2O = 2-dehydropantoate + (6S)-5,6,7,8-tetrahydrofolate. The protein operates within cofactor biosynthesis; (R)-pantothenate biosynthesis; (R)-pantoate from 3-methyl-2-oxobutanoate: step 1/2. Functionally, catalyzes the reversible reaction in which hydroxymethyl group from 5,10-methylenetetrahydrofolate is transferred onto alpha-ketoisovalerate to form ketopantoate. This chain is 3-methyl-2-oxobutanoate hydroxymethyltransferase 1, found in Zymomonas mobilis subsp. mobilis (strain ATCC 31821 / ZM4 / CP4).